A 1670-amino-acid chain; its full sequence is Hemolymph clottable protein (1670 aa).

The first 14 residues, 1–14, serve as a signal peptide directing secretion; it reads MKALILLLLGACQA. The vittelogenin stretch occupies residues 15-674; it reads LQPGLEYQYR…FANFVTTTIY (660 aa). The 750-residue stretch at 15–764 folds into the Vitellogenin domain; it reads LQPGLEYQYR…LKIDGQQRGL (750 aa). N-linked (GlcNAc...) asparagine glycosylation is present at Asn106. Over residues 198–231 the composition is skewed to low complexity; it reads SSYTTKTKSKTSSKTSSKTSSKTSSKTSKTGKTS. Positions 198–236 are disordered; that stretch reads SSYTTKTKSKTSSKTSSKTSSKTSSKTSKTGKTSPGQLA. 3 N-linked (GlcNAc...) asparagine glycosylation sites follow: Asn319, Asn459, and Asn1301. The 161-residue stretch at 1390 to 1550 folds into the VWFD domain; the sequence is VSCTIDETKV…SWASPGEGCA (161 aa). Disulfide bonds link Cys1392–Cys1513 and Cys1414–Cys1549.

In terms of assembly, homodimer; disulfide-linked. Also exists as oligomers. In terms of processing, glycosylated. Contains mannose and N-acetylglucosamine. Post-translationally, substrate of transglutaminase. In terms of tissue distribution, widely expressed with highest levels in gill and heart. Not expressed in hemocytes.

The protein resides in the secreted. Forms stable clots in the presence of calcium. The protein is Hemolymph clottable protein of Penaeus monodon (Giant tiger prawn).